A 156-amino-acid polypeptide reads, in one-letter code: Snaclec A5 (156 aa).

An N-terminal signal peptide occupies residues 1–23 (MGRSISVSFGLLVVFLSLSGTGA). Cystine bridges form between Cys27-Cys38, Cys55-Cys154, and Cys129-Cys146. The C-type lectin domain maps to 34–155 (HEGHCYKVFN…CGKPYRFTCE (122 aa)).

It belongs to the snaclec family. In terms of assembly, heterodimer; disulfide-linked. As to expression, expressed by the venom gland.

Its subcellular location is the secreted. Its function is as follows. Interferes with one step of hemostasis (modulation of platelet aggregation, or coagulation cascade, for example). The polypeptide is Snaclec A5 (Macrovipera lebetinus (Levantine viper)).